The primary structure comprises 185 residues: RING-H2 finger protein ATL8 (185 aa).

Residues 28–48 traverse the membrane as a helical segment; sequence LVLILAVLLCALTCIIGLIAV. Residues 104–146 form an RING-type; atypical zinc finger; the sequence is CAICLTEFAAGDELRVLPQCGHGFHVSCIDTWLGSHSSCPSCR. Positions 161–185 are disordered; that stretch reads PGSSSSGPEPDTRIKQREDGPDNLP. The span at 170-185 shows a compositional bias: basic and acidic residues; it reads PDTRIKQREDGPDNLP.

This sequence belongs to the RING-type zinc finger family. ATL subfamily.

It is found in the membrane. It catalyses the reaction S-ubiquitinyl-[E2 ubiquitin-conjugating enzyme]-L-cysteine + [acceptor protein]-L-lysine = [E2 ubiquitin-conjugating enzyme]-L-cysteine + N(6)-ubiquitinyl-[acceptor protein]-L-lysine.. It participates in protein modification; protein ubiquitination. In Arabidopsis thaliana (Mouse-ear cress), this protein is RING-H2 finger protein ATL8 (ATL8).